The primary structure comprises 246 residues: Serine protease 1 (246 aa).

The first 17 residues, 1-17 (MKTFIFLALLGAAVAFP), serve as a signal peptide directing secretion. A propeptide spans 18 to 23 (VDDDDK) (activation peptide). The Peptidase S1 domain occupies 24 to 244 (IVGGYTCGAN…YVSWIKQTIA (221 aa)). 6 cysteine pairs are disulfide-bonded: C30/C160, C48/C64, C132/C233, C139/C206, C171/C185, and C196/C220. The Charge relay system role is filled by H63. Ca(2+) contacts are provided by E75, N77, V80, and E85. The active-site Charge relay system is the D107. Residues 194–195 (DS), 197–198 (QG), and S200 contribute to the substrate site. The Charge relay system role is filled by S200.

Belongs to the peptidase S1 family. Interacts with SERPINA1. The cofactor is Ca(2+). In terms of processing, autocatalytic cleavage after Lys-23 leads to beta-trypsin by releasing a terminal hexapeptide. Subsequent cleavage after Lys-148 leads to alpha-trypsin. Further cleavage after Lys-193 yields pseudotrypsin. A cleavage may also occur after Arg-122. Post-translationally, not sulfated on tyrosine residue(s). As to expression, synthesized in the acinar cells of the pancreas.

Its subcellular location is the secreted. It is found in the extracellular space. The enzyme catalyses Preferential cleavage: Arg-|-Xaa, Lys-|-Xaa.. Its activity is regulated as follows. Is inhibited by scorpion cyclotide trypsin inhibitor TopI1. The chain is Serine protease 1 (PRSS1) from Bos taurus (Bovine).